The chain runs to 536 residues: Arylsulfatase K (536 aa).

An N-terminal signal peptide occupies residues M1–A24. Residues D42 and C82 each coordinate Ca(2+). The active-site Nucleophile is the C82. A 3-oxoalanine (Cys) modification is found at C82. A substrate-binding site is contributed by K130. An N-linked (GlcNAc...) asparagine glycan is attached at N195. H253 is a binding site for substrate. N264 carries an N-linked (GlcNAc...) asparagine glycan. Positions 315 and 316 each coordinate Ca(2+). Residues N377, N416, and N501 are each glycosylated (N-linked (GlcNAc...) asparagine).

This sequence belongs to the sulfatase family. Requires Ca(2+) as cofactor. The conversion to 3-oxoalanine (also known as C-formylglycine, FGly), of a serine or cysteine residue in prokaryotes and of a cysteine residue in eukaryotes, is critical for catalytic activity.

Its subcellular location is the secreted. The protein resides in the lysosome. The enzyme catalyses an aryl sulfate + H2O = a phenol + sulfate + H(+). It carries out the reaction Hydrolysis of the 2-sulfate groups of the 2-O-sulfo-D-glucuronate residues of chondroitin sulfate, heparin and heparitin sulfate.. Catalyzes the hydrolysis of pseudosubstrates such as p-nitrocatechol sulfate and p-nitrophenyl sulfate. Catalyzes the hydrolysis of the 2-sulfate groups of the 2-O-sulfo-D-glucuronate residues of chondroitin sulfate, heparin and heparitin sulfate. Acts selectively on 2-sulfoglucuronate and lacks activity against 2-sulfoiduronate. The chain is Arylsulfatase K (arsk) from Xenopus laevis (African clawed frog).